Consider the following 334-residue polypeptide: Spermidine synthase 1 (334 aa).

A compositionally biased stretch (basic and acidic residues) spans 1-16 (MDAKETSATDLKRPRE). The interval 1-35 (MDAKETSATDLKRPREEDDNGGAATMETENGDQKK) is disordered. Residues 45-282 (PGWFSEMSPM…GVIGFMLCST (238 aa)) enclose the PABS domain. Residue glutamine 76 coordinates S-adenosyl 3-(methylsulfanyl)propylamine. Tyrosine 106 lines the putrescine pocket. Residues glutamine 107, aspartate 131, glutamate 151, 182-183 (DG), and aspartate 201 each bind S-adenosyl 3-(methylsulfanyl)propylamine. Residue aspartate 201 is the Proton acceptor of the active site. Putrescine contacts are provided by residues 201–204 (DSSD) and tyrosine 270.

It belongs to the spermidine/spermine synthase family. As to quaternary structure, homotetramer and heterodimer. Component of a multiprotein complex. Interacts with SPMS and SPDSYN2.

It carries out the reaction S-adenosyl 3-(methylsulfanyl)propylamine + putrescine = S-methyl-5'-thioadenosine + spermidine + H(+). It functions in the pathway amine and polyamine biosynthesis; spermidine biosynthesis; spermidine from putrescine: step 1/1. This is Spermidine synthase 1 (SPDSYN1) from Arabidopsis thaliana (Mouse-ear cress).